A 240-amino-acid chain; its full sequence is 4-hydroxy-tetrahydrodipicolinate reductase (240 aa).

NAD(+) contacts are provided by residues 79 to 81 (ATT) and 103 to 106 (SANM). Catalysis depends on H135, which acts as the Proton donor/acceptor. H136 contacts (S)-2,3,4,5-tetrahydrodipicolinate. K139 functions as the Proton donor in the catalytic mechanism. 145–146 (GT) lines the (S)-2,3,4,5-tetrahydrodipicolinate pocket.

This sequence belongs to the DapB family.

The protein resides in the cytoplasm. The enzyme catalyses (S)-2,3,4,5-tetrahydrodipicolinate + NAD(+) + H2O = (2S,4S)-4-hydroxy-2,3,4,5-tetrahydrodipicolinate + NADH + H(+). It catalyses the reaction (S)-2,3,4,5-tetrahydrodipicolinate + NADP(+) + H2O = (2S,4S)-4-hydroxy-2,3,4,5-tetrahydrodipicolinate + NADPH + H(+). It functions in the pathway amino-acid biosynthesis; L-lysine biosynthesis via DAP pathway; (S)-tetrahydrodipicolinate from L-aspartate: step 4/4. Catalyzes the conversion of 4-hydroxy-tetrahydrodipicolinate (HTPA) to tetrahydrodipicolinate. The chain is 4-hydroxy-tetrahydrodipicolinate reductase from Staphylococcus aureus (strain MSSA476).